We begin with the raw amino-acid sequence, 392 residues long: 4-hydroxy-3-methylbut-2-en-1-yl diphosphate synthase (flavodoxin) (392 aa).

Residues cysteine 280, cysteine 283, cysteine 315, and glutamate 322 each coordinate [4Fe-4S] cluster. The segment covering 371–380 has biased composition (basic and acidic residues); that stretch reads TEKGSDHCSE. The segment at 371–392 is disordered; it reads TEKGSDHCSETTRSGSPVVTVN. Polar residues predominate over residues 381–392; it reads TTRSGSPVVTVN.

The protein belongs to the IspG family. [4Fe-4S] cluster is required as a cofactor.

It carries out the reaction (2E)-4-hydroxy-3-methylbut-2-enyl diphosphate + oxidized [flavodoxin] + H2O + 2 H(+) = 2-C-methyl-D-erythritol 2,4-cyclic diphosphate + reduced [flavodoxin]. The protein operates within isoprenoid biosynthesis; isopentenyl diphosphate biosynthesis via DXP pathway; isopentenyl diphosphate from 1-deoxy-D-xylulose 5-phosphate: step 5/6. Converts 2C-methyl-D-erythritol 2,4-cyclodiphosphate (ME-2,4cPP) into 1-hydroxy-2-methyl-2-(E)-butenyl 4-diphosphate. This chain is 4-hydroxy-3-methylbut-2-en-1-yl diphosphate synthase (flavodoxin), found in Mycobacterium leprae (strain Br4923).